The chain runs to 123 residues: KxDL motif-containing protein LO9-177 (123 aa).

A KxDL motif is present at residues 78 to 81 (KDDL).

The protein belongs to the KXD1 family. In terms of assembly, homodimer. Component of a nuclear cell elongation controlling complex made of ILI5/BUL1, LO9-177 and BC1. Binds directly to ILI5/BUL1, ILI4/BU1, BUL2 and BUL3. Binds to BC1 in the nucleus. Interacts with BCL1.

Its subcellular location is the nucleus. The protein localises to the cytoplasm. In terms of biological role, contributes, together with ILI5/BUL1 and BC1, to the promotion of leaf inclination and grain size by modulating cell elongation. The chain is KxDL motif-containing protein LO9-177 from Oryza sativa subsp. indica (Rice).